Reading from the N-terminus, the 216-residue chain is Adenylate kinase (216 aa).

Position 10 to 15 (10 to 15 (GAGKGT)) interacts with ATP. The segment at 30-59 (STGDILRENVKKGTALGLKAKSYMDKGELV) is NMP. AMP-binding positions include threonine 31, arginine 36, 57–59 (ELV), 85–88 (GFPR), and glutamine 92. The interval 126-163 (GRRICRSCGASYHLVFNPPKAKDLCDSCGGELYQRDDD) is LID. ATP is bound at residue arginine 127. Zn(2+)-binding residues include cysteine 130 and cysteine 133. 136–137 (SY) contacts ATP. Positions 150 and 153 each coordinate Zn(2+). Residues arginine 160 and arginine 171 each coordinate AMP. Residue lysine 199 participates in ATP binding.

The protein belongs to the adenylate kinase family. As to quaternary structure, monomer.

The protein localises to the cytoplasm. The enzyme catalyses AMP + ATP = 2 ADP. The protein operates within purine metabolism; AMP biosynthesis via salvage pathway; AMP from ADP: step 1/1. In terms of biological role, catalyzes the reversible transfer of the terminal phosphate group between ATP and AMP. Plays an important role in cellular energy homeostasis and in adenine nucleotide metabolism. This is Adenylate kinase from Methanocella arvoryzae (strain DSM 22066 / NBRC 105507 / MRE50).